Here is a 433-residue protein sequence, read N- to C-terminus: Glutamate-1-semialdehyde 2,1-aminomutase (433 aa).

K273 carries the post-translational modification N6-(pyridoxal phosphate)lysine.

It belongs to the class-III pyridoxal-phosphate-dependent aminotransferase family. HemL subfamily. Homodimer. It depends on pyridoxal 5'-phosphate as a cofactor.

It localises to the cytoplasm. The enzyme catalyses (S)-4-amino-5-oxopentanoate = 5-aminolevulinate. Its pathway is porphyrin-containing compound metabolism; protoporphyrin-IX biosynthesis; 5-aminolevulinate from L-glutamyl-tRNA(Glu): step 2/2. It participates in porphyrin-containing compound metabolism; chlorophyll biosynthesis. This Rippkaea orientalis (strain PCC 8801 / RF-1) (Cyanothece sp. (strain PCC 8801)) protein is Glutamate-1-semialdehyde 2,1-aminomutase.